The primary structure comprises 363 residues: Protein MAK32 (363 aa).

The protein to S.pombe SpAC4G8.14c.

Its function is as follows. Necessary for the structural stability of L-A double-stranded RNA-containing particles. Necessary for growth at 37 degrees Celsius as well as for maintenance of the killer plasmid. In Saccharomyces cerevisiae (strain ATCC 204508 / S288c) (Baker's yeast), this protein is Protein MAK32 (MAK32).